We begin with the raw amino-acid sequence, 421 residues long: O-glycosyltransferase braB (421 aa).

Positions 1-26 are disordered; it reads MVPSVMEGAPQLGITSTDTSSAGVPP. Over residues 13-22 the composition is skewed to polar residues; the sequence is GITSTDTSSA.

It belongs to the afumC glycosyltransferase family.

It participates in secondary metabolite biosynthesis. O-glycosyltransferase; part of the gene cluster that mediates the biosynthesis of the brasilane terpene glycosides brasilane D and E. The biosynthesis starts with the activity of the terpene cyclase braA that converts farnesyl pyrophosphate into the sesquiterpene alcohol trichobrasilenol. Subsequently, trichobrasilenol is glycosylated by the O-glycosyltransferase braB putatively using UDP-GlcNAc as sugar donor to yield brasilane A. The latter then undergoes two rounds of oxidation performed by the cytochrome P450 monooxygenase braC. In the first round braC hydroxylates C-12 forming brasilane D, which serves as substrate in the second round to establish the epoxide at the bond between C-5 and C-10 and oxidize the alcohol at C-12 to an aldehyde leading to the final product brasilane E. BraB is also able to glycosylate geraniol, linalool, perillyl alcohol, 3,4-dichlorophenol and, to a lesser extend, benzyl alcohol. This is O-glycosyltransferase braB from Annulohypoxylon truncatum (Hypoxylon truncatum).